We begin with the raw amino-acid sequence, 169 residues long: Sulfopyruvate decarboxylase subunit alpha (169 aa).

This sequence belongs to the ComD family. Heterododecamer composed of 6 subunits alpha and 6 subunits beta.

It carries out the reaction 3-sulfopyruvate + H(+) = sulfoacetaldehyde + CO2. It participates in cofactor biosynthesis; coenzyme M biosynthesis; sulfoacetaldehyde from phosphoenolpyruvate and sulfite: step 4/4. Its activity is regulated as follows. Inhibited by oxygen when heated in air at 80 degrees Celsius. The enzyme is reactivated by addition of dithionite. Involved in the biosynthesis of the coenzyme M (2-mercaptoethanesulfonic acid). Catalyzes the decarboxylation of sulfopyruvate to sulfoacetaldehyde. This Methanocaldococcus jannaschii (strain ATCC 43067 / DSM 2661 / JAL-1 / JCM 10045 / NBRC 100440) (Methanococcus jannaschii) protein is Sulfopyruvate decarboxylase subunit alpha.